Here is a 174-residue protein sequence, read N- to C-terminus: Endoribonuclease YbeY (174 aa).

Positions 124, 128, and 134 each coordinate Zn(2+).

The protein belongs to the endoribonuclease YbeY family. The cofactor is Zn(2+).

The protein localises to the cytoplasm. Its function is as follows. Single strand-specific metallo-endoribonuclease involved in late-stage 70S ribosome quality control and in maturation of the 3' terminus of the 16S rRNA. This chain is Endoribonuclease YbeY, found in Synechococcus elongatus (strain ATCC 33912 / PCC 7942 / FACHB-805) (Anacystis nidulans R2).